Reading from the N-terminus, the 335-residue chain is MSLPIKLGYKASAEQFNPRELVEYTVAAERHGFDSVVVSDHFQPWRYTGGHAPWALAWLGAVGERTSRVQIGTSVLTPTFRYNPAIIAQAFATFGMLYPGRVFLGVGTGEALNEQAVGLKEWPEFKERFARLRESVELMRKLWTEERVNYEGEYYRTVDATVYDKPSEPIPVYVSAGGAVVARYAGRAGDGFICTSGKGAELYTETLLPAVQEGADKVGRDAGGIDKLIEIKLSYDPDPWLALNNTRFWSPLSLSAEQKHSLSDPKQMEEAADALPMEQIAKRWIVASDPDEVVEKIKFYTDLGLNHLVFHAPGHDQLRFLEVFERDLAPRLRSL.

Residue Asp-40 participates in coenzyme F420-(gamma-Glu)n binding. The active-site Proton donor is His-41. Residues Thr-77 and 108 to 109 each bind coenzyme F420-(gamma-Glu)n; that span reads TG. The Proton acceptor role is filled by Glu-110. Residues Asn-113, 177–178, and 180–181 contribute to the coenzyme F420-(gamma-Glu)n site; these read GG and VV. Substrate-binding residues include Thr-195, Lys-198, Lys-259, and Arg-283.

This sequence belongs to the F420-dependent glucose-6-phosphate dehydrogenase family. In terms of assembly, homodimer.

It carries out the reaction oxidized coenzyme F420-(gamma-L-Glu)(n) + D-glucose 6-phosphate + H(+) = 6-phospho-D-glucono-1,5-lactone + reduced coenzyme F420-(gamma-L-Glu)(n). Its function is as follows. Catalyzes the coenzyme F420-dependent oxidation of glucose 6-phosphate (G6P) to 6-phosphogluconolactone. The chain is F420-dependent glucose-6-phosphate dehydrogenase from Segniliparus rotundus (strain ATCC BAA-972 / CDC 1076 / CIP 108378 / DSM 44985 / JCM 13578).